We begin with the raw amino-acid sequence, 310 residues long: Manganese ABC transporter substrate-binding lipoprotein scaA (310 aa).

Positions 1–19 (MKKCRFLVLLLLAFVGLAA) are cleaved as a signal peptide. Cys-20 carries N-palmitoyl cysteine lipidation. Residue Cys-20 is the site of S-diacylglycerol cysteine attachment. Mn(2+) is bound by residues His-68, His-140, Glu-206, and Asp-281.

The protein belongs to the bacterial solute-binding protein 9 family. Lipoprotein receptor antigen (Lrai) subfamily. As to quaternary structure, the complex is composed of two ATP-binding proteins (ScaC), two transmembrane proteins (ScaB) and a solute-binding protein (ScaA).

The protein resides in the cell membrane. Functionally, part of ATP-binding cassette (ABC) transport system ScaABC involved in manganese import. Essential for growth under Mn(2+)-limiting conditions. Also acts as an adhesin which is involved on adherence to extracellular matrix. It is an important factor in pathogenesis and infection. This chain is Manganese ABC transporter substrate-binding lipoprotein scaA, found in Streptococcus gordonii.